Reading from the N-terminus, the 253-residue chain is Tryptophan synthase alpha chain (253 aa).

Catalysis depends on proton acceptor residues Glu48 and Asp59.

Belongs to the TrpA family. In terms of assembly, tetramer of two alpha and two beta chains.

The enzyme catalyses (1S,2R)-1-C-(indol-3-yl)glycerol 3-phosphate + L-serine = D-glyceraldehyde 3-phosphate + L-tryptophan + H2O. The protein operates within amino-acid biosynthesis; L-tryptophan biosynthesis; L-tryptophan from chorismate: step 5/5. Functionally, the alpha subunit is responsible for the aldol cleavage of indoleglycerol phosphate to indole and glyceraldehyde 3-phosphate. The polypeptide is Tryptophan synthase alpha chain (Caldicellulosiruptor saccharolyticus (strain ATCC 43494 / DSM 8903 / Tp8T 6331)).